The sequence spans 137 residues: uncharacterized protein (137 aa).

The region spanning 58–135 (VHVVAKTVRP…EVNLQMFLMN (78 aa)) is the Ubiquitin-like domain.

The protein localises to the cytoplasm. The protein resides in the nucleus. This is an uncharacterized protein from Schizosaccharomyces pombe (strain 972 / ATCC 24843) (Fission yeast).